The following is a 1127-amino-acid chain: Collagen alpha-2(I) chain (1127 aa).

Residues 1–16 (DGKPGLPGPAGPPGPP) are compositionally biased toward pro residues. A disordered region spans residues 1 to 1017 (DGKPGLPGPA…GPAGPAGGGY (1017 aa)). 3 stretches are compositionally biased toward low complexity: residues 171-191 (AGPA…AAGP), 221-230 (EPGPNGAVGP), and 237-258 (PGNN…AGAP). Pro residues predominate over residues 260 to 270 (FPGPRGGPGPQ). Residues 272-282 (PQGAAGQRGLA) show a composition bias toward low complexity. The span at 289–298 (GVKGDGGPKG) shows a compositional bias: gly residues. 4 stretches are compositionally biased toward low complexity: residues 326 to 345 (ATGP…RGMP), 355 to 398 (AAGP…AGPA), 436 to 449 (APGP…TGAT), and 461 to 473 (QGAA…QGLP). Over residues 474 to 483 (GPAGGAGEAG) the composition is skewed to gly residues. The span at 508–518 (NPGAAGASGPQ) shows a compositional bias: low complexity. A compositionally biased stretch (gly residues) spans 531 to 568 (GTDGGKGEPGAAGAAGGPGHQGPGGMPGERGAAGGPGG). A compositionally biased stretch (basic and acidic residues) spans 569–580 (KGEKGEAGHRGP). Composition is skewed to low complexity over residues 611 to 625 (SGSF…ARGA) and 634 to 647 (PAGA…PGAD). The segment covering 657-666 (GPSGGKGESG) has biased composition (gly residues). 3 stretches are compositionally biased toward low complexity: residues 667–692 (PSGP…TGAR), 703–730 (FPGA…PAGK), and 758–778 (SGEK…PLGL). The span at 792–801 (GSPGGAGAVG) shows a compositional bias: gly residues. 2 stretches are compositionally biased toward low complexity: residues 802–824 (EAGR…LGLP) and 860–872 (PGSS…AGAP). Residues 876 to 897 (GPSGGAGRPGNRGESGPGGAAG) are compositionally biased toward gly residues. Over residues 898–913 (AVGPAGARGAAGPSGP) the composition is skewed to low complexity. The span at 914–928 (RGEKGVAGEKGERGM) shows a compositional bias: basic and acidic residues. Low complexity-rich tracts occupy residues 937-956 (LQGM…AGPN) and 986-997 (PGARGPPGYVGP). Residues 998 to 1010 (AGPPGXPGLPGPA) are compositionally biased toward pro residues. In terms of domain architecture, Fibrillar collagen NC1 spans 1093-1127 (RTNKPSRLPLLDLAPLDLGGADQEFGLDLGPVCFK).

This sequence belongs to the fibrillar collagen family.

It localises to the secreted. The protein resides in the extracellular space. It is found in the extracellular matrix. The protein is Collagen alpha-2(I) chain of Epinephelus marginatus (Dusky grouper).